A 477-amino-acid polypeptide reads, in one-letter code: Glycogen synthase (477 aa).

K15 lines the ADP-alpha-D-glucose pocket.

The protein belongs to the glycosyltransferase 1 family. Bacterial/plant glycogen synthase subfamily.

The enzyme catalyses [(1-&gt;4)-alpha-D-glucosyl](n) + ADP-alpha-D-glucose = [(1-&gt;4)-alpha-D-glucosyl](n+1) + ADP + H(+). It participates in glycan biosynthesis; glycogen biosynthesis. Synthesizes alpha-1,4-glucan chains using ADP-glucose. The polypeptide is Glycogen synthase (Shigella sonnei (strain Ss046)).